Consider the following 145-residue polypeptide: Aminoglycoside N(6')-acetyltransferase type 1 (145 aa).

The N-acetyltransferase domain occupies Met1 to Cys145. Residues Trp22, His25, Tyr66, and Glu79 each contribute to the substrate site. Acetyl-CoA is bound by residues Ile81–Val83 and Gln89–Lys94. Position 115 (Asp115) interacts with substrate. Asn120 contributes to the acetyl-CoA binding site. Residue Glu136 coordinates substrate.

As to quaternary structure, homodimer.

The catalysed reaction is kanamycin B + acetyl-CoA = N(6')-acetylkanamycin B + CoA + H(+). In terms of biological role, catalyzes the transfer of an acetyl group from acetyl-CoA to the 6'-amino group of aminoglycoside molecules conferring resistance to antibiotics containing the purpurosamine ring including amikacin, tobramycin, dibekacin and ribostamycin. Able to acetylate eukaryotic histone proteins. This Salmonella enteritidis protein is Aminoglycoside N(6')-acetyltransferase type 1.